The sequence spans 289 residues: Thymidylate synthase (289 aa).

DUMP-binding positions include Arg-21 and 150–151 (RR). Residue Cys-170 is the Nucleophile of the active site. DUMP is bound by residues 191-194 (RSAD), Asn-202, and 232-234 (HIY). Asp-194 is a binding site for (6R)-5,10-methylene-5,6,7,8-tetrahydrofolate. Ala-288 serves as a coordination point for (6R)-5,10-methylene-5,6,7,8-tetrahydrofolate.

Belongs to the thymidylate synthase family. Bacterial-type ThyA subfamily. As to quaternary structure, homodimer.

It is found in the cytoplasm. It catalyses the reaction dUMP + (6R)-5,10-methylene-5,6,7,8-tetrahydrofolate = 7,8-dihydrofolate + dTMP. The protein operates within pyrimidine metabolism; dTTP biosynthesis. Catalyzes the reductive methylation of 2'-deoxyuridine-5'-monophosphate (dUMP) to 2'-deoxythymidine-5'-monophosphate (dTMP) while utilizing 5,10-methylenetetrahydrofolate (mTHF) as the methyl donor and reductant in the reaction, yielding dihydrofolate (DHF) as a by-product. This enzymatic reaction provides an intracellular de novo source of dTMP, an essential precursor for DNA biosynthesis. This Malacoplasma penetrans (strain HF-2) (Mycoplasma penetrans) protein is Thymidylate synthase.